Here is a 646-residue protein sequence, read N- to C-terminus: Hexon protein p72 (646 aa).

Belongs to the NCLDV major capsid protein family. As to quaternary structure, homotrimer. The membrane-bound form, but not the cytosolic one, assembles into large complexes. Interacts with the minor capsid proteins M1249L and p17; these interactions form a rigid zipper structure that stabilizes the capsomers.

It localises to the virion. The protein resides in the host endoplasmic reticulum membrane. The protein localises to the host cytoplasm. It is found in the host cytosol. Its function is as follows. Capsid protein that self-assembles to form the pseudo-hexameric capsomers of the icosahedral capsid. The capsid is constructed of 2760 pseudo-hexameric capsomers and 12 pentameric capsomers, with a T=277 symmetry, about 200 nm in diameter. The capsid encapsulates the DNA-containing nucleoid, the core shell and the inner membrane. Plays an essential role in virion assembly. Involved in virus attachment to the host cell. The polypeptide is Hexon protein p72 (Ornithodoros (relapsing fever ticks)).